A 145-amino-acid chain; its full sequence is Venom protein 30.1 (145 aa).

The N-terminal stretch at 1 to 18 is a signal peptide; sequence MIIVKLFTCLLMVSSVLT.

Contains 5 disulfide bonds. In terms of tissue distribution, expressed by the venom gland.

The protein resides in the secreted. The protein is Venom protein 30.1 of Lychas mucronatus (Chinese swimming scorpion).